We begin with the raw amino-acid sequence, 426 residues long: Dihydroorotase (426 aa).

Zn(2+)-binding residues include histidine 61 and histidine 63. Residues 63–65 (HCR) and asparagine 95 contribute to the substrate site. Zn(2+) is bound by residues glutamate 146, histidine 180, histidine 229, and aspartate 297. Aspartate 297 is an active-site residue. Histidine 301 provides a ligand contact to substrate.

It belongs to the metallo-dependent hydrolases superfamily. DHOase family. Class I DHOase subfamily. It depends on Zn(2+) as a cofactor.

It catalyses the reaction (S)-dihydroorotate + H2O = N-carbamoyl-L-aspartate + H(+). The protein operates within pyrimidine metabolism; UMP biosynthesis via de novo pathway; (S)-dihydroorotate from bicarbonate: step 3/3. Functionally, catalyzes the reversible cyclization of carbamoyl aspartate to dihydroorotate. This Methanopyrus kandleri (strain AV19 / DSM 6324 / JCM 9639 / NBRC 100938) protein is Dihydroorotase.